The following is a 104-amino-acid chain: Flagellar hook-basal body complex protein FliE (104 aa).

Belongs to the FliE family.

It localises to the bacterial flagellum basal body. This Salmonella heidelberg (strain SL476) protein is Flagellar hook-basal body complex protein FliE.